A 154-amino-acid chain; its full sequence is MutT-like protein (154 aa).

The region spanning 15–136 (PLHSVSVAGV…YAIRLLDALD (122 aa)) is the Nudix hydrolase domain. Residues glycine 48, glutamate 63, glutamate 66, and glutamate 67 each coordinate Mg(2+). Residues 48–69 (GVLELDETPETGVAREVWEETG) carry the Nudix box motif.

The protein belongs to the Nudix hydrolase family.

The protein is MutT-like protein of Streptomyces ambofaciens.